The chain runs to 636 residues: Leucine-rich repeat and fibronectin type-III domain-containing protein 4 (636 aa).

Residues 1 to 16 form the signal peptide; it reads MAPPLLLLLLASGAAA. Positions 17-48 constitute an LRRNT domain; the sequence is CPLPCVCQNLSESLSTLCAHRGLLFVPPNVDR. The Extracellular segment spans residues 17 to 518; sequence CPLPCVCQNL…LQAHVLGGTL (502 aa). N-linked (GlcNAc...) asparagine glycans are attached at residues Asn25 and Asn70. LRR repeat units lie at residues 49–70, 73–94, 97–118, 121–142, 146–169, 170–191, and 194–215; these read RTVE…DFRN, GLVD…SFGD, SLRS…SLRG, NLQH…AFDD, SLED…GSMP, ALHT…VFAQ, and QLSR…PLFS. The LRRCT domain occupies 234 to 280; that stretch reads NPLHCNCELLWLRRLARPDDLETCASPPTLAGRYFWAVPEGEFSCEP. Residues 281–367 form the Ig-like domain; sequence PLIARHTQRL…GEATARVELR (87 aa). Cys302 and Cys351 are disulfide-bonded. Asn324, Asn333, Asn376, and Asn440 each carry an N-linked (GlcNAc...) asparagine glycan. In terms of domain architecture, Fibronectin type-III spans 405 to 502; it reads SEPAVQVTEV…GCAHFSTLPA (98 aa). A helical transmembrane segment spans residues 519 to 539; sequence TVAVGGVLVAALLVFTVALLV. The Cytoplasmic segment spans residues 540 to 636; it reads RGRGAGNGRL…SAERLEESVV (97 aa). The tract at residues 556–585 is disordered; sequence VQSQTNGGTSPMPKSHPPRSPPPRPQRSCS. Residues 569–580 are compositionally biased toward pro residues; the sequence is KSHPPRSPPPRP. 2 positions are modified to phosphoserine: Ser585 and Ser627. Residues 633–636 carry the PDZ-binding motif; the sequence is ESVV.

It belongs to the LRFN family. Can form heteromeric complexes with LRFN1, LRFN2, LRFN3 and LRFN5. Unable to form homophilic interactions across cell junctions. Interacts with DLG1, DLG2 and DLG3. Also interacts with DLG4. In terms of processing, glycosylated. In terms of tissue distribution, expressed in brain and testis. In the brain, weak, but broad expression in the cerebral cortex and diencephalic nuclei. Also detected in other parts of the central nervous system, including the olfactory bulb, pons, cerebellum, and medulla oblongata, as well as in the peripheral nervous system, such as the ganglia of cranial nerves and the dorsal root ganglion during gestation.

It localises to the membrane. Promotes neurite outgrowth in hippocampal neurons. May play a role in redistributing DLG4 to the cell periphery. In Mus musculus (Mouse), this protein is Leucine-rich repeat and fibronectin type-III domain-containing protein 4 (Lrfn4).